The sequence spans 439 residues: Ribosomal protein uS12 methylthiotransferase RimO (439 aa).

Residues 1–117 (MNIGFISLGC…IAGVVNRIAQ (117 aa)) form the MTTase N-terminal domain. [4Fe-4S] cluster is bound by residues C10, C46, C80, C154, C158, and C161. A Radical SAM core domain is found at 140-370 (TTPPGSAYLK…LRLQQKITRQ (231 aa)). Residues 373–439 (LARINTQEKV…RNYDMIGEYQ (67 aa)) enclose the TRAM domain.

Belongs to the methylthiotransferase family. RimO subfamily. [4Fe-4S] cluster is required as a cofactor.

Its subcellular location is the cytoplasm. It catalyses the reaction L-aspartate(89)-[ribosomal protein uS12]-hydrogen + (sulfur carrier)-SH + AH2 + 2 S-adenosyl-L-methionine = 3-methylsulfanyl-L-aspartate(89)-[ribosomal protein uS12]-hydrogen + (sulfur carrier)-H + 5'-deoxyadenosine + L-methionine + A + S-adenosyl-L-homocysteine + 2 H(+). Catalyzes the methylthiolation of an aspartic acid residue of ribosomal protein uS12. This Syntrophomonas wolfei subsp. wolfei (strain DSM 2245B / Goettingen) protein is Ribosomal protein uS12 methylthiotransferase RimO.